The following is a 505-amino-acid chain: AMP phosphorylase 2 (505 aa).

Residues Gly-169, 195-200, Thr-204, Ser-265, and Lys-289 contribute to the AMP site; that span reads SRAITT.

The protein belongs to the thymidine/pyrimidine-nucleoside phosphorylase family. Type 2 subfamily.

It carries out the reaction AMP + phosphate = alpha-D-ribose 1,5-bisphosphate + adenine. It catalyses the reaction CMP + phosphate = cytosine + alpha-D-ribose 1,5-bisphosphate. The catalysed reaction is UMP + phosphate = alpha-D-ribose 1,5-bisphosphate + uracil. Catalyzes the conversion of AMP and phosphate to adenine and ribose 1,5-bisphosphate (R15P). Exhibits phosphorylase activity toward CMP and UMP in addition to AMP. Functions in an archaeal AMP degradation pathway, together with R15P isomerase and RubisCO. The chain is AMP phosphorylase 2 from Archaeoglobus fulgidus (strain ATCC 49558 / DSM 4304 / JCM 9628 / NBRC 100126 / VC-16).